Consider the following 279-residue polypeptide: NAD kinase (279 aa).

The active-site Proton acceptor is D61. Residues 61-62 (DG), 138-139 (ND), K149, K166, D168, and 179-184 (TGYSFS) contribute to the NAD(+) site.

The protein belongs to the NAD kinase family. The cofactor is a divalent metal cation.

Its subcellular location is the cytoplasm. It carries out the reaction NAD(+) + ATP = ADP + NADP(+) + H(+). Functionally, involved in the regulation of the intracellular balance of NAD and NADP, and is a key enzyme in the biosynthesis of NADP. Catalyzes specifically the phosphorylation on 2'-hydroxyl of the adenosine moiety of NAD to yield NADP. This is NAD kinase from Borreliella burgdorferi (strain ATCC 35210 / DSM 4680 / CIP 102532 / B31) (Borrelia burgdorferi).